The following is a 41-amino-acid chain: MIMITIKLGRDYTQDLINKCGRGGVGGGGLNGIFLSYEGVV.

This is an uncharacterized protein from Dictyostelium discoideum (Social amoeba).